The chain runs to 269 residues: Extracellular metalloprotease UREG_07765 (269 aa).

A signal peptide spans 1–18 (MRLSVSLLALAFGSLVAA). N-linked (GlcNAc...) asparagine glycosylation is present at asparagine 179. Residue histidine 191 coordinates Zn(2+). Glutamate 192 is an active-site residue. Histidine 195 is a Zn(2+) binding site. Residues 207–227 (VSDTPPQRSSTQGCPSSRDSC) form a disordered region. The span at 210–225 (TPPQRSSTQGCPSSRD) shows a compositional bias: polar residues. A disulfide bridge connects residues cysteine 220 and cysteine 246.

The protein belongs to the peptidase M43B family.

It localises to the secreted. Its function is as follows. Secreted metalloproteinase that allows assimilation of proteinaceous substrates. The sequence is that of Extracellular metalloprotease UREG_07765 from Uncinocarpus reesii (strain UAMH 1704).